A 162-amino-acid chain; its full sequence is Urease subunit beta (162 aa).

The disordered stretch occupies residues 116-162; that stretch reads WRRSSAAGDAPQELPQVEAAERGRKLDDATDVDTNVGTEEGFEEGRN. A compositionally biased stretch (basic and acidic residues) spans 134 to 143; sequence AAERGRKLDD.

Belongs to the urease beta subunit family. As to quaternary structure, heterotrimer of UreA (gamma), UreB (beta) and UreC (alpha) subunits. Three heterotrimers associate to form the active enzyme.

Its subcellular location is the cytoplasm. It carries out the reaction urea + 2 H2O + H(+) = hydrogencarbonate + 2 NH4(+). The protein operates within nitrogen metabolism; urea degradation; CO(2) and NH(3) from urea (urease route): step 1/1. The sequence is that of Urease subunit beta from Corynebacterium glutamicum (strain ATCC 13032 / DSM 20300 / JCM 1318 / BCRC 11384 / CCUG 27702 / LMG 3730 / NBRC 12168 / NCIMB 10025 / NRRL B-2784 / 534).